Consider the following 132-residue polypeptide: Small ribosomal subunit protein uS8 (132 aa).

Belongs to the universal ribosomal protein uS8 family. As to quaternary structure, part of the 30S ribosomal subunit. Contacts proteins S5 and S12.

One of the primary rRNA binding proteins, it binds directly to 16S rRNA central domain where it helps coordinate assembly of the platform of the 30S subunit. The chain is Small ribosomal subunit protein uS8 from Geobacter sulfurreducens (strain ATCC 51573 / DSM 12127 / PCA).